A 142-amino-acid polypeptide reads, in one-letter code: Large ribosomal subunit protein uL13 (142 aa).

The protein belongs to the universal ribosomal protein uL13 family. In terms of assembly, part of the 50S ribosomal subunit.

This protein is one of the early assembly proteins of the 50S ribosomal subunit, although it is not seen to bind rRNA by itself. It is important during the early stages of 50S assembly. The sequence is that of Large ribosomal subunit protein uL13 from Treponema denticola (strain ATCC 35405 / DSM 14222 / CIP 103919 / JCM 8153 / KCTC 15104).